Here is a 425-residue protein sequence, read N- to C-terminus: Formyl-CoA:oxalate CoA-transferase (425 aa).

Residues 17–18, Arg38, 72–75, 96–98, Arg104, and 136–139 contribute to the CoA site; these read QS, LDTK, NFG, and KVYE. Asp168 acts as the Nucleophile in catalysis. 247–249 contributes to the substrate binding site; sequence GGQ.

It belongs to the CoA-transferase III family. Frc subfamily. Homodimer.

The enzyme catalyses formyl-CoA + oxalate = oxalyl-CoA + formate. Its pathway is metabolic intermediate degradation; oxalate degradation; CO(2) and formate from oxalate: step 1/2. Its function is as follows. Involved in the catabolism of oxalate and in the adapatation to low pH via the induction of the oxalate-dependent acid tolerance response (ATR). Catalyzes the transfer of the CoA moiety from formyl-CoA to oxalate. In Bradyrhizobium sp. (strain ORS 278), this protein is Formyl-CoA:oxalate CoA-transferase.